The chain runs to 277 residues: 3-methyl-2-oxobutanoate hydroxymethyltransferase (277 aa).

The Mg(2+) site is built by aspartate 43 and aspartate 82. 3-methyl-2-oxobutanoate contacts are provided by residues 43–44 (DS), aspartate 82, and lysine 112. Glutamate 114 contacts Mg(2+). The Proton acceptor role is filled by glutamate 181.

This sequence belongs to the PanB family. In terms of assembly, homodecamer; pentamer of dimers. Requires Mg(2+) as cofactor.

It is found in the cytoplasm. The catalysed reaction is 3-methyl-2-oxobutanoate + (6R)-5,10-methylene-5,6,7,8-tetrahydrofolate + H2O = 2-dehydropantoate + (6S)-5,6,7,8-tetrahydrofolate. Its pathway is cofactor biosynthesis; (R)-pantothenate biosynthesis; (R)-pantoate from 3-methyl-2-oxobutanoate: step 1/2. Functionally, catalyzes the reversible reaction in which hydroxymethyl group from 5,10-methylenetetrahydrofolate is transferred onto alpha-ketoisovalerate to form ketopantoate. In Listeria innocua serovar 6a (strain ATCC BAA-680 / CLIP 11262), this protein is 3-methyl-2-oxobutanoate hydroxymethyltransferase.